The primary structure comprises 648 residues: DNA gyrase subunit B (648 aa).

In terms of domain architecture, Toprim spans 427-541 (TELFIVEGDS…AGYVYIAQPP (115 aa)). Positions 433, 506, and 508 each coordinate Mg(2+).

Belongs to the type II topoisomerase GyrB family. Heterotetramer, composed of two GyrA and two GyrB chains. In the heterotetramer, GyrA contains the active site tyrosine that forms a transient covalent intermediate with DNA, while GyrB binds cofactors and catalyzes ATP hydrolysis. Mg(2+) is required as a cofactor. The cofactor is Mn(2+). Requires Ca(2+) as cofactor.

It is found in the cytoplasm. It catalyses the reaction ATP-dependent breakage, passage and rejoining of double-stranded DNA.. A type II topoisomerase that negatively supercoils closed circular double-stranded (ds) DNA in an ATP-dependent manner to modulate DNA topology and maintain chromosomes in an underwound state. Negative supercoiling favors strand separation, and DNA replication, transcription, recombination and repair, all of which involve strand separation. Also able to catalyze the interconversion of other topological isomers of dsDNA rings, including catenanes and knotted rings. Type II topoisomerases break and join 2 DNA strands simultaneously in an ATP-dependent manner. This is DNA gyrase subunit B from Streptococcus pneumoniae serotype 4 (strain ATCC BAA-334 / TIGR4).